The following is a 257-amino-acid chain: UPF0246 protein RHOS4_29700 (257 aa).

It belongs to the UPF0246 family.

The protein is UPF0246 protein RHOS4_29700 of Cereibacter sphaeroides (strain ATCC 17023 / DSM 158 / JCM 6121 / CCUG 31486 / LMG 2827 / NBRC 12203 / NCIMB 8253 / ATH 2.4.1.) (Rhodobacter sphaeroides).